Consider the following 390-residue polypeptide: Chitinase-3-like protein 2 (390 aa).

The N-terminal stretch at 1 to 26 (MGATTMDQKSLWAGVVVLLLLQGGSA) is a signal peptide. The region spanning 27–390 (YKLVCYFTNW…QAVKRSLGSL (364 aa)) is the GH18 domain. C31 and C56 are joined by a disulfide. An N-linked (GlcNAc...) asparagine glycan is attached at N35. Chitin is bound by residues 75–76 (DK), 102–105 (GGYL), Y104, Y146, 210–213 (LSFD), D213, and W360.

The protein belongs to the glycosyl hydrolase 18 family. In terms of tissue distribution, highest expression in chondrocytes, followed by synoviocytes, lung and heart. Not detected in spleen, pancreas, and liver. May also be expressed in developing brain and placenta.

The protein localises to the secreted. Functionally, lectin that binds chitooligosaccharides and other glycans with high affinity, but not heparin. Has no chitinase activity. The polypeptide is Chitinase-3-like protein 2 (CHI3L2) (Homo sapiens (Human)).